A 473-amino-acid polypeptide reads, in one-letter code: MAP kinase-activated protein kinase 5 (473 aa).

The Protein kinase domain occupies 22-304; it reads INWTQKLGAG…IEGVLDHPWL (283 aa). ATP is bound by residues 28–36 and lysine 51; that span reads LGAGISGPV. At serine 115 the chain carries Phosphoserine; by PKA. Aspartate 148 serves as the catalytic Proton acceptor. Threonine 182 carries the phosphothreonine; by MAPK11, MAPK14, MAPK4, MAPK6 and PKA modification. A phosphoserine mark is found at serine 212 and serine 354. The stretch at 409–440 forms a coiled coil; sequence ENEDEKLNEVMQEAWKYNRECKLLRDTLQSFS.

This sequence belongs to the protein kinase superfamily. CAMK Ser/Thr protein kinase family. As to quaternary structure, interacts with ERK3/MAPK6 and ERK4/MAPK4 (via FRIEDE motif); the interaction is direct. Interacts with YWHAE; the interaction prevents phosphorylation of HSP27/HSPB1 leading to disrupt F-actin polymerization. Interacts with SQSTM1. Post-translationally, phosphorylated on Thr-182 ERK3/MAPK6 or ERK4/MAPK4; which is the regulatory phosphorylation site and is located on the T-loop/loop 12, leading to activation. Phosphorylation at Thr-182 by p38-alpha/MAPK14, p38-beta/MAPK11 is subject to debate. Phosphorylated at Ser-115 by PKA/PRKACA, leading to localization to the cytoplasm. Autophosphorylated. As to expression, expressed ubiquitously.

It localises to the cytoplasm. The protein resides in the nucleus. It carries out the reaction L-seryl-[protein] + ATP = O-phospho-L-seryl-[protein] + ADP + H(+). The enzyme catalyses L-threonyl-[protein] + ATP = O-phospho-L-threonyl-[protein] + ADP + H(+). Its activity is regulated as follows. Activated following phosphorylation at Thr-182 by p38-alpha/MAPK14, p38-beta/MAPK11, ERK2/MAPK1, ERK3/MAPK6, and ERK4/MAPK4. Activated by stress-related extracellular stimuli; such as H(2)O(2), arsenite, anisomycin TNF alpha and also PMA and the calcium ionophore A23187; but to a lesser extent. In vitro, activated by SQSTM1. Inhibited by diterpenoid alkaloid noroxoaconitine. Its function is as follows. Tumor suppressor serine/threonine-protein kinase involved in mTORC1 signaling and post-transcriptional regulation. Phosphorylates FOXO3, ERK3/MAPK6, ERK4/MAPK4, HSP27/HSPB1, p53/TP53 and RHEB. Acts as a tumor suppressor by mediating Ras-induced senescence and phosphorylating p53/TP53. Involved in post-transcriptional regulation of MYC by mediating phosphorylation of FOXO3: phosphorylation of FOXO3 leads to promote nuclear localization of FOXO3, enabling expression of miR-34b and miR-34c, 2 post-transcriptional regulators of MYC that bind to the 3'UTR of MYC transcript and prevent MYC translation. Acts as a negative regulator of mTORC1 signaling by mediating phosphorylation and inhibition of RHEB. Part of the atypical MAPK signaling via its interaction with ERK3/MAPK6 or ERK4/MAPK4: the precise role of the complex formed with ERK3/MAPK6 or ERK4/MAPK4 is still unclear, but the complex follows a complex set of phosphorylation events: upon interaction with atypical MAPK (ERK3/MAPK6 or ERK4/MAPK4), ERK3/MAPK6 (or ERK4/MAPK4) is phosphorylated and then mediates phosphorylation and activation of MAPKAPK5, which in turn phosphorylates ERK3/MAPK6 (or ERK4/MAPK4). Mediates phosphorylation of HSP27/HSPB1 in response to PKA/PRKACA stimulation, inducing F-actin rearrangement. The chain is MAP kinase-activated protein kinase 5 (MAPKAPK5) from Homo sapiens (Human).